Reading from the N-terminus, the 231-residue chain is 2-C-methyl-D-erythritol 4-phosphate cytidylyltransferase (231 aa).

It belongs to the IspD/TarI cytidylyltransferase family. IspD subfamily.

The enzyme catalyses 2-C-methyl-D-erythritol 4-phosphate + CTP + H(+) = 4-CDP-2-C-methyl-D-erythritol + diphosphate. The protein operates within isoprenoid biosynthesis; isopentenyl diphosphate biosynthesis via DXP pathway; isopentenyl diphosphate from 1-deoxy-D-xylulose 5-phosphate: step 2/6. Catalyzes the formation of 4-diphosphocytidyl-2-C-methyl-D-erythritol from CTP and 2-C-methyl-D-erythritol 4-phosphate (MEP). The protein is 2-C-methyl-D-erythritol 4-phosphate cytidylyltransferase of Dictyoglomus thermophilum (strain ATCC 35947 / DSM 3960 / H-6-12).